The sequence spans 364 residues: Probable secreted lipase phiG (364 aa).

A signal peptide spans 1–18 (MMPFMDLILSILVSSVLL). Residue Asn49 is glycosylated (N-linked (GlcNAc...) asparagine). The active-site Nucleophile is the Ser203. A glycan (N-linked (GlcNAc...) asparagine) is linked at Asn262.

The protein belongs to the AB hydrolase superfamily.

The protein localises to the secreted. The enzyme catalyses a carboxylic ester + H2O = an alcohol + a carboxylate + H(+). In terms of biological role, part of the gene cluster that mediates the biosynthesis of the antihypercholesterolemic agents phomoidrides which are dimeric anhydrides. The function of phiG within the pathway has still to be determined. The pathway begins with the highly reducing polyketide synthase phiA that catalyzes the formation of a C12-fatty acyl-ACP, starting from one acetate and 5 malonate units. The hydrolase phiM is involved in the release of the C12-fatty acyl chain from phiA. The alkylcitrate synthase (ACS) phiJ and the alkylcitrate dehydratase (ACDH) phiI then give rise to decarboxylated monomeric anhydrides by coupling the C12-fatty acyl chain with oxalacetic acid. The cyclase phiC is responsible for the dimerization of the monomeric anhydrides which leads to the production of prephomoidride that contains the characteristic bicyclo[4.3.1]deca-1,6-diene system of phomoidrides. Iterative oxidation catalyzed by the alpha-ketoglutarate-dependent dioxygenase phiK produced then phomoidride A. Finally, the methyltransferase phiE converts phomoidride A to phomoidride B via an acetalization reaction. The phosphatidylethanolamine-binding protein phiB and phiN are not essential for dimerization and their functions have still to be determined. The polypeptide is Probable secreted lipase phiG (Fungal sp. (strain ATCC 74256)).